A 554-amino-acid chain; its full sequence is Gamma-aminobutyric acid receptor subunit alpha-4 (554 aa).

A signal peptide spans 1–35 (MVSAKKVPAIALSAGVSFALLRFLCLAVCLNESPG). The Extracellular segment spans residues 36–259 (QNQKEEKLCT…FHLRRKMGYF (224 aa)). Asparagine 47 carries an N-linked (GlcNAc...) asparagine glycan. Arginine 100 is a binding site for 4-aminobutanoate. Residues asparagine 144 and asparagine 157 are each glycosylated (N-linked (GlcNAc...) asparagine). Threonine 163 is a 4-aminobutanoate binding site. The cysteines at positions 172 and 186 are disulfide-linked. The chain crosses the membrane as a helical span at residues 260-280 (MIQTYIPCIMTVILSQVSFWI). The Cytoplasmic segment spans residues 281 to 284 (NKES). Residues 285–305 (VPARTVFGITTVLTMTTLSIS) traverse the membrane as a helical segment. The Extracellular segment spans residues 306–318 (ARHSLPKVSYATA). A helical transmembrane segment spans residues 319–341 (MDWFIAVCFAFVFSALIEFAAVN). Over 342-517 (YFTNIQMEKA…PPPSGSGTSK (176 aa)) the chain is Cytoplasmic. Disordered regions lie at residues 350 to 381 (KAKR…QNTN), 397 to 435 (ESDV…SPNP), 452 to 471 (PSAS…ASVG), and 495 to 515 (ATGK…GSGT). A compositionally biased stretch (low complexity) spans 410 to 422 (SSKSSTVVQESSK). Pro residues predominate over residues 502-511 (TPPPSAPPPS). Residues 518 to 540 (IDKYARILFPVTFGAFNMVYWVV) form a helical membrane-spanning segment. The Extracellular segment spans residues 541-554 (YLSKDTMEKSESLM).

It belongs to the ligand-gated ion channel (TC 1.A.9) family. Gamma-aminobutyric acid receptor (TC 1.A.9.5) subfamily. GABRA4 sub-subfamily. Heteropentamer, formed by a combination of alpha (GABRA1-6), beta (GABRB1-3), gamma (GABRG1-3), delta (GABRD), epsilon (GABRE), rho (GABRR1-3), pi (GABRP) and theta (GABRQ) chains, each subunit exhibiting distinct physiological and pharmacological properties. As to expression, expressed in the brain.

It localises to the cell membrane. The protein resides in the postsynaptic cell membrane. The catalysed reaction is chloride(in) = chloride(out). Potentiated by histamine. Functionally, alpha subunit of the heteropentameric ligand-gated chloride channel gated by gamma-aminobutyric acid (GABA), a major inhibitory neurotransmitter in the brain. GABA-gated chloride channels, also named GABA(A) receptors (GABAAR), consist of five subunits arranged around a central pore and contain GABA active binding site(s) located at the alpha and beta subunit interface(s). When activated by GABA, GABAARs selectively allow the flow of chloride anions across the cell membrane down their electrochemical gradient. GABAARs containing alpha-4 are predominantly extrasynaptic, contributing to tonic inhibition in dentate granule cells and thalamic relay neurons. Extrasynaptic alpha-4-containing GABAARs control levels of excitability and network activity. GABAAR containing alpha-4-beta-3-delta subunits can simultaneously bind GABA and histamine where histamine binds at the interface of two neighboring beta subunits, which may be involved in the regulation of sleep and wakefulness. This Homo sapiens (Human) protein is Gamma-aminobutyric acid receptor subunit alpha-4.